The chain runs to 131 residues: D-ribose pyranase (131 aa).

Catalysis depends on histidine 20, which acts as the Proton donor. Residues aspartate 28, histidine 98, and 120–122 (YAN) contribute to the substrate site.

Belongs to the RbsD / FucU family. RbsD subfamily. Homodecamer.

It localises to the cytoplasm. The catalysed reaction is beta-D-ribopyranose = beta-D-ribofuranose. It participates in carbohydrate metabolism; D-ribose degradation; D-ribose 5-phosphate from beta-D-ribopyranose: step 1/2. Catalyzes the interconversion of beta-pyran and beta-furan forms of D-ribose. The polypeptide is D-ribose pyranase (Clostridium perfringens (strain 13 / Type A)).